The following is a 433-amino-acid chain: Histidinol dehydrogenase homolog (433 aa).

Zn(2+) is bound by residues glutamine 249 and histidine 252. Catalysis depends on proton acceptor residues glutamate 319 and histidine 320. Positions 353 and 412 each coordinate Zn(2+).

Belongs to the histidinol dehydrogenase family. Requires Zn(2+) as cofactor.

The polypeptide is Histidinol dehydrogenase homolog (Ruegeria pomeroyi (strain ATCC 700808 / DSM 15171 / DSS-3) (Silicibacter pomeroyi)).